A 229-amino-acid chain; its full sequence is tRNA (guanosine(18)-2'-O)-methyltransferase (229 aa).

Threonine 96, isoleucine 139, and leucine 148 together coordinate S-adenosyl-L-methionine.

It belongs to the class IV-like SAM-binding methyltransferase superfamily. RNA methyltransferase TrmH family.

It carries out the reaction guanosine(18) in tRNA + S-adenosyl-L-methionine = 2'-O-methylguanosine(18) in tRNA + S-adenosyl-L-homocysteine + H(+). Catalyzes the 2'-O methylation of guanosine at position 18 in tRNA. In Escherichia coli O157:H7, this protein is tRNA (guanosine(18)-2'-O)-methyltransferase.